A 150-amino-acid chain; its full sequence is Macrodomain Ter protein (150 aa).

Belongs to the MatP family. Homodimer.

The protein localises to the cytoplasm. Its function is as follows. Required for spatial organization of the terminus region of the chromosome (Ter macrodomain) during the cell cycle. Prevents early segregation of duplicated Ter macrodomains during cell division. Binds specifically to matS, which is a 13 bp signature motif repeated within the Ter macrodomain. The sequence is that of Macrodomain Ter protein from Escherichia coli O8 (strain IAI1).